A 226-amino-acid polypeptide reads, in one-letter code: Enolase-phosphatase E1 (226 aa).

Belongs to the HAD-like hydrolase superfamily. MasA/MtnC family. In terms of assembly, monomer. Requires Mg(2+) as cofactor.

The enzyme catalyses 5-methylsulfanyl-2,3-dioxopentyl phosphate + H2O = 1,2-dihydroxy-5-(methylsulfanyl)pent-1-en-3-one + phosphate. It participates in amino-acid biosynthesis; L-methionine biosynthesis via salvage pathway; L-methionine from S-methyl-5-thio-alpha-D-ribose 1-phosphate: step 3/6. Its pathway is amino-acid biosynthesis; L-methionine biosynthesis via salvage pathway; L-methionine from S-methyl-5-thio-alpha-D-ribose 1-phosphate: step 4/6. In terms of biological role, bifunctional enzyme that catalyzes the enolization of 2,3-diketo-5-methylthiopentyl-1-phosphate (DK-MTP-1-P) into the intermediate 2-hydroxy-3-keto-5-methylthiopentenyl-1-phosphate (HK-MTPenyl-1-P), which is then dephosphorylated to form the acireductone 1,2-dihydroxy-3-keto-5-methylthiopentene (DHK-MTPene). The chain is Enolase-phosphatase E1 from Shewanella pealeana (strain ATCC 700345 / ANG-SQ1).